A 257-amino-acid chain; its full sequence is NH(3)-dependent NAD(+) synthetase (257 aa).

40-47 (GISGGIDS) is an ATP binding site. Aspartate 46 is a binding site for Mg(2+). Arginine 121 contributes to the deamido-NAD(+) binding site. Threonine 141 contributes to the ATP binding site. Residue glutamate 146 coordinates Mg(2+). The deamido-NAD(+) site is built by lysine 154 and aspartate 161. 2 residues coordinate ATP: lysine 170 and serine 192. 238-239 (HK) provides a ligand contact to deamido-NAD(+).

Belongs to the NAD synthetase family. As to quaternary structure, homodimer.

The enzyme catalyses deamido-NAD(+) + NH4(+) + ATP = AMP + diphosphate + NAD(+) + H(+). It functions in the pathway cofactor biosynthesis; NAD(+) biosynthesis; NAD(+) from deamido-NAD(+) (ammonia route): step 1/1. Its function is as follows. Catalyzes the ATP-dependent amidation of deamido-NAD to form NAD. Uses ammonia as a nitrogen source. The chain is NH(3)-dependent NAD(+) synthetase from Mycoplasmopsis pulmonis (strain UAB CTIP) (Mycoplasma pulmonis).